A 143-amino-acid chain; its full sequence is Large ribosomal subunit protein uL11 (143 aa).

This sequence belongs to the universal ribosomal protein uL11 family. Part of the ribosomal stalk of the 50S ribosomal subunit. Interacts with L10 and the large rRNA to form the base of the stalk. L10 forms an elongated spine to which L12 dimers bind in a sequential fashion forming a multimeric L10(L12)X complex. Post-translationally, one or more lysine residues are methylated.

Forms part of the ribosomal stalk which helps the ribosome interact with GTP-bound translation factors. The sequence is that of Large ribosomal subunit protein uL11 from Kocuria rhizophila (strain ATCC 9341 / DSM 348 / NBRC 103217 / DC2201).